The sequence spans 477 residues: Probable ribonuclease FAU-1 (477 aa).

The protein belongs to the FAU-1 family.

In terms of biological role, probable RNase involved in rRNA stability through maturation and/or degradation of precursor rRNAs. Binds to RNA in loop regions with AU-rich sequences. The protein is Probable ribonuclease FAU-1 of Staphylothermus marinus (strain ATCC 43588 / DSM 3639 / JCM 9404 / F1).